A 351-amino-acid chain; its full sequence is Carbamoyl phosphate synthase small chain (351 aa).

Residues 1 to 171 (MKGIIYLEDG…IIHIAGNGNK (171 aa)) are CPSase. The L-glutamine site is built by S45, G219, and G221. Residues 171 to 351 (KVAVMDFGIK…TYLFDQFVNL (181 aa)) form the Glutamine amidotransferase type-1 domain. The Nucleophile role is filled by C246. L247, Q250, N288, G290, and Y291 together coordinate L-glutamine. Residues H331 and E333 contribute to the active site.

This sequence belongs to the CarA family. Composed of two chains; the small (or glutamine) chain promotes the hydrolysis of glutamine to ammonia, which is used by the large (or ammonia) chain to synthesize carbamoyl phosphate. Tetramer of heterodimers (alpha,beta)4.

It carries out the reaction hydrogencarbonate + L-glutamine + 2 ATP + H2O = carbamoyl phosphate + L-glutamate + 2 ADP + phosphate + 2 H(+). It catalyses the reaction L-glutamine + H2O = L-glutamate + NH4(+). It participates in amino-acid biosynthesis; L-arginine biosynthesis; carbamoyl phosphate from bicarbonate: step 1/1. It functions in the pathway pyrimidine metabolism; UMP biosynthesis via de novo pathway; (S)-dihydroorotate from bicarbonate: step 1/3. Functionally, small subunit of the glutamine-dependent carbamoyl phosphate synthetase (CPSase). CPSase catalyzes the formation of carbamoyl phosphate from the ammonia moiety of glutamine, carbonate, and phosphate donated by ATP, constituting the first step of 2 biosynthetic pathways, one leading to arginine and/or urea and the other to pyrimidine nucleotides. The small subunit (glutamine amidotransferase) binds and cleaves glutamine to supply the large subunit with the substrate ammonia. The chain is Carbamoyl phosphate synthase small chain from Clostridium acetobutylicum (strain ATCC 824 / DSM 792 / JCM 1419 / IAM 19013 / LMG 5710 / NBRC 13948 / NRRL B-527 / VKM B-1787 / 2291 / W).